Consider the following 264-residue polypeptide: Small ribosomal subunit protein eS1 (264 aa).

A disordered region spans residues 232-264 (HGEGGGSGKPSGDETGAKVERADGYEPPVQESV). A compositionally biased stretch (basic and acidic residues) spans 242 to 255 (SGDETGAKVERADG).

Belongs to the eukaryotic ribosomal protein eS1 family. Component of the small ribosomal subunit. Mature ribosomes consist of a small (40S) and a large (60S) subunit. The 40S subunit contains about 33 different proteins and 1 molecule of RNA (18S). The 60S subunit contains about 49 different proteins and 3 molecules of RNA (28S, 5.8S and 5S). Part of the small subunit (SSU) processome, composed of more than 70 proteins and the RNA chaperone small nucleolar RNA (snoRNA) U3.

The protein localises to the cytoplasm. Its subcellular location is the nucleus. It is found in the nucleolus. Its function is as follows. Component of the small ribosomal subunit. The ribosome is a large ribonucleoprotein complex responsible for the synthesis of proteins in the cell. Part of the small subunit (SSU) processome, first precursor of the small eukaryotic ribosomal subunit. During the assembly of the SSU processome in the nucleolus, many ribosome biogenesis factors, an RNA chaperone and ribosomal proteins associate with the nascent pre-rRNA and work in concert to generate RNA folding, modifications, rearrangements and cleavage as well as targeted degradation of pre-ribosomal RNA by the RNA exosome. May play a role during erythropoiesis. In Ophiophagus hannah (King cobra), this protein is Small ribosomal subunit protein eS1.